The primary structure comprises 649 residues: DNA mismatch repair protein MutL (649 aa).

The protein belongs to the DNA mismatch repair MutL/HexB family.

This protein is involved in the repair of mismatches in DNA. It is required for dam-dependent methyl-directed DNA mismatch repair. May act as a 'molecular matchmaker', a protein that promotes the formation of a stable complex between two or more DNA-binding proteins in an ATP-dependent manner without itself being part of a final effector complex. In Streptococcus pneumoniae (strain JJA), this protein is DNA mismatch repair protein MutL.